The chain runs to 197 residues: DnaJ homolog subfamily C member 5 (197 aa).

Residues Gly-13 to Leu-82 form the J domain. The tract at residues Glu-153–Asn-197 is disordered. Residues Ala-175–Asn-197 show a composition bias toward polar residues.

Post-translationally, palmitoylated. Palmitoylation occurs probably in the cysteine-rich domain and regulates DNAJC5 stable membrane attachment.

It localises to the cytoplasm. The protein localises to the cytosol. It is found in the membrane. The protein resides in the cytoplasmic vesicle. Its subcellular location is the secretory vesicle. It localises to the chromaffin granule membrane. The protein localises to the melanosome. It is found in the cell membrane. May have an important role in presynaptic function. May be involved in calcium-dependent neurotransmitter release at nerve endings. In Xenopus laevis (African clawed frog), this protein is DnaJ homolog subfamily C member 5.